The primary structure comprises 42 residues: Bacteriocin bavaricin-MN (42 aa).

An intrachain disulfide couples C10 to C15.

Belongs to the bacteriocin class IIA/YGNGV family.

It is found in the secreted. In terms of biological role, has antimicrobial activity. This chain is Bacteriocin bavaricin-MN, found in Latilactobacillus sakei (Lactobacillus sakei).